The sequence spans 424 residues: Choline-phosphate cytidylyltransferase (424 aa).

Residues 1 to 70 (MANPTTGKSS…RKRRRLTKEF (70 aa)) are disordered. Residues 14–24 (KLSNSSLSNLF) show a composition bias toward low complexity. Ser-16 bears the Phosphoserine mark. A compositionally biased stretch (acidic residues) spans 35–44 (ETEEQDNEDK). Basic and acidic residues predominate over residues 45-55 (DESKNQDENKD). Thr-59 carries the phosphothreonine modification. CTP-binding positions include 111 to 119 (VFDLFHLGH) and Lys-149. The substrate site is built by Lys-149 and Trp-178. CTP contacts are provided by residues 195-196 (HD), Tyr-200, and 223-227 (RTNGV). A Phosphoserine modification is found at Ser-346. The disordered stretch occupies residues 348–424 (ATEFANEFTG…LTQKKKQSAN (77 aa)). Residues 381-398 (NSNNTNTNSDSDSNTNST) are compositionally biased toward low complexity. Position 401 is a phosphoserine; by CK2 (Ser-401).

The protein belongs to the cytidylyltransferase family.

The protein localises to the membrane. The catalysed reaction is phosphocholine + CTP + H(+) = CDP-choline + diphosphate. Its pathway is phospholipid metabolism; phosphatidylcholine biosynthesis; phosphatidylcholine from phosphocholine: step 1/2. Functionally, catalyzes the key rate-limiting step in the CDP-choline pathway for phosphatidylcholine biosynthesis. The polypeptide is Choline-phosphate cytidylyltransferase (PCT1) (Saccharomyces cerevisiae (strain ATCC 204508 / S288c) (Baker's yeast)).